Consider the following 160-residue polypeptide: Large ribosomal subunit protein uL22c (160 aa).

The protein belongs to the universal ribosomal protein uL22 family. Part of the 50S ribosomal subunit.

It is found in the plastid. The protein resides in the chloroplast. In terms of biological role, this protein binds specifically to 23S rRNA. The globular domain of the protein is located near the polypeptide exit tunnel on the outside of the subunit, while an extended beta-hairpin is found that lines the wall of the exit tunnel in the center of the 70S ribosome. The sequence is that of Large ribosomal subunit protein uL22c (rpl22) from Aethionema grandiflorum (Persian stone-cress).